Here is a 513-residue protein sequence, read N- to C-terminus: ATP synthase subunit alpha (513 aa).

Residue 169 to 176 coordinates ATP; the sequence is GDRQTGKT.

It belongs to the ATPase alpha/beta chains family. In terms of assembly, F-type ATPases have 2 components, CF(1) - the catalytic core - and CF(0) - the membrane proton channel. CF(1) has five subunits: alpha(3), beta(3), gamma(1), delta(1), epsilon(1). CF(0) has three main subunits: a(1), b(2) and c(9-12). The alpha and beta chains form an alternating ring which encloses part of the gamma chain. CF(1) is attached to CF(0) by a central stalk formed by the gamma and epsilon chains, while a peripheral stalk is formed by the delta and b chains.

The protein resides in the cell inner membrane. The enzyme catalyses ATP + H2O + 4 H(+)(in) = ADP + phosphate + 5 H(+)(out). Produces ATP from ADP in the presence of a proton gradient across the membrane. The alpha chain is a regulatory subunit. The polypeptide is ATP synthase subunit alpha (Enterobacter sp. (strain 638)).